Here is a 524-residue protein sequence, read N- to C-terminus: Methylmalonyl-CoA carboxyltransferase 12S subunit (524 aa).

Positions 13–268 constitute a CoA carboxyltransferase N-terminal domain; the sequence is MEGRVEQLAE…NNTEEASFVN (256 aa). Positions 13-506 are carboxyltransferase; it reads MEGRVEQLAE…RRKIASALEM (494 aa). The CoA carboxyltransferase C-terminal domain maps to 274–506; the sequence is SPNTELRDIV…RRKIASALEM (233 aa).

Homohexamer. Transcarboxylase is composed of three subunits: 1.3S, 5S, and 12S. The core of the enzyme is composed of six 12S subunits. On each side of the core there are three pairs of 5S subunits. Each 5S dimer is attached to the core by two 1.3S subunits. Thus the total number of chains is 30 (6 + 12 + 12).

The catalysed reaction is (S)-methylmalonyl-CoA + pyruvate = propanoyl-CoA + oxaloacetate. Functionally, the 12S subunit specifically catalyzes the transfer of the carboxyl group of methylmalonyl CoA to the biotin of the 1.3S subunit forming propanoyl-CoA and carboxylated 1.3S-biotin. The protein is Methylmalonyl-CoA carboxyltransferase 12S subunit of Propionibacterium freudenreichii subsp. shermanii.